The primary structure comprises 100 residues: Mini zinc finger protein 2 (100 aa).

The segment at 1-26 (MRKRQVVLRRASPEEPSRSSSTASSL) is disordered. The ZF-HD dimerization-type; degenerate zinc-finger motif lies at 33 to 83 (YGECQKNHAAAVGGYAVDGCREFMASRGEEGTVAALTCAACGCHRSFHRRE).

As to quaternary structure, homo- and heterodimers. Interacts with ZHD1, ZHD3, ZHD5, ZHD8, ZHD10 and ZHD13. In terms of tissue distribution, mostly expressed in stems, flowers and siliques, and, to a lower extent, in inflorescence.

It localises to the cytoplasm. Functionally, inhibits zinc finger homeodomain (ZHD) transcription factors by interacting with them to prevent both their nuclear localization and their DNA-binding properties. Involved in integrating signals from multiple hormones by regulating the expression of specific genes. The chain is Mini zinc finger protein 2 (MIF2) from Arabidopsis thaliana (Mouse-ear cress).